Reading from the N-terminus, the 401-residue chain is Phosphoglycerate kinase (401 aa).

Substrate is bound by residues 20-22, arginine 35, 58-61, arginine 117, and arginine 154; these read DFN and HLGR. Residues lysine 204, glycine 298, glutamate 329, and 358–361 contribute to the ATP site; that span reads GGDS.

Belongs to the phosphoglycerate kinase family. Monomer.

It is found in the cytoplasm. The catalysed reaction is (2R)-3-phosphoglycerate + ATP = (2R)-3-phospho-glyceroyl phosphate + ADP. It participates in carbohydrate degradation; glycolysis; pyruvate from D-glyceraldehyde 3-phosphate: step 2/5. The protein is Phosphoglycerate kinase of Bifidobacterium adolescentis (strain ATCC 15703 / DSM 20083 / NCTC 11814 / E194a).